The following is a 182-amino-acid chain: Peptide deformylase (182 aa).

C100 and H142 together coordinate Fe cation. E143 is a catalytic residue. A Fe cation-binding site is contributed by H146.

It belongs to the polypeptide deformylase family. Requires Fe(2+) as cofactor.

The enzyme catalyses N-terminal N-formyl-L-methionyl-[peptide] + H2O = N-terminal L-methionyl-[peptide] + formate. Removes the formyl group from the N-terminal Met of newly synthesized proteins. Requires at least a dipeptide for an efficient rate of reaction. N-terminal L-methionine is a prerequisite for activity but the enzyme has broad specificity at other positions. This chain is Peptide deformylase, found in Bartonella bacilliformis (strain ATCC 35685 / KC583 / Herrer 020/F12,63).